Here is a 133-residue protein sequence, read N- to C-terminus: MSFQVRIIAPNGIIWDSEAEEIILSTNTGKIGVLTNHTSLLTGLDIGTIRIRALNNQWNTLALMSGFAVIKDNVATIIVSEAENGANIKSEEAQTQLEEAKSYFNTAKGTKNEVEANLAVKRAETRLKASQNL.

The protein belongs to the ATPase epsilon chain family. As to quaternary structure, F-type ATPases have 2 components, CF(1) - the catalytic core - and CF(0) - the membrane proton channel. CF(1) has five subunits: alpha(3), beta(3), gamma(1), delta(1), epsilon(1). CF(0) has three main subunits: a, b and c.

Its subcellular location is the plastid. It localises to the chloroplast thylakoid membrane. Its function is as follows. Produces ATP from ADP in the presence of a proton gradient across the membrane. The chain is ATP synthase epsilon chain, chloroplastic from Mesostigma viride (Green alga).